The sequence spans 62 residues: Small ribosomal subunit protein eS31 (62 aa).

Zn(2+) is bound by residues Cys-29, Cys-32, Cys-48, and Cys-51. A C4-type zinc finger spans residues 29–51 (CPRCGSFMAFHKWPVPRWHCGKC).

This sequence belongs to the eukaryotic ribosomal protein eS31 family. Part of the 30S ribosomal subunit. Zn(2+) serves as cofactor.

The chain is Small ribosomal subunit protein eS31 from Hyperthermus butylicus (strain DSM 5456 / JCM 9403 / PLM1-5).